The sequence spans 352 residues: Large ribosomal subunit protein uL10 (352 aa).

The segment covering 286-297 (DDEDALPEELQD) has biased composition (acidic residues). The segment at 286–352 (DDEDALPEEL…GAEGLGEMFG (67 aa)) is disordered. Positions 299-310 (DAPAAPAGGEAD) are enriched in low complexity. Positions 324–340 (EADDADDSDDDDDDDDG) are enriched in acidic residues. Over residues 343-352 (GAEGLGEMFG) the composition is skewed to gly residues.

This sequence belongs to the universal ribosomal protein uL10 family. In terms of assembly, part of the 50S ribosomal subunit. Forms part of the ribosomal stalk which helps the ribosome interact with GTP-bound translation factors. Forms a heptameric L10(L12)2(L12)2(L12)2 complex, where L10 forms an elongated spine to which the L12 dimers bind in a sequential fashion.

Forms part of the ribosomal stalk, playing a central role in the interaction of the ribosome with GTP-bound translation factors. The chain is Large ribosomal subunit protein uL10 from Halobacterium salinarum (strain ATCC 700922 / JCM 11081 / NRC-1) (Halobacterium halobium).